A 96-amino-acid chain; its full sequence is Co-chaperonin GroES (96 aa).

The protein belongs to the GroES chaperonin family. As to quaternary structure, heptamer of 7 subunits arranged in a ring. Interacts with the chaperonin GroEL.

It localises to the cytoplasm. Its function is as follows. Together with the chaperonin GroEL, plays an essential role in assisting protein folding. The GroEL-GroES system forms a nano-cage that allows encapsulation of the non-native substrate proteins and provides a physical environment optimized to promote and accelerate protein folding. GroES binds to the apical surface of the GroEL ring, thereby capping the opening of the GroEL channel. In Thioalkalivibrio sulfidiphilus (strain HL-EbGR7), this protein is Co-chaperonin GroES.